The following is a 78-amino-acid chain: Large ribosomal subunit protein bL28 (78 aa).

Positions 1-31 are disordered; it reads MAAHCQVTGAEPGFGHSISHSHRRNKRRFDP.

This sequence belongs to the bacterial ribosomal protein bL28 family.

This is Large ribosomal subunit protein bL28 from Paenarthrobacter aurescens (strain TC1).